The following is a 249-amino-acid chain: Putative TrmH family tRNA/rRNA methyltransferase (249 aa).

Residues Gly-196, Ile-216, and Leu-225 each coordinate S-adenosyl-L-methionine.

Belongs to the class IV-like SAM-binding methyltransferase superfamily. RNA methyltransferase TrmH family.

The sequence is that of Putative TrmH family tRNA/rRNA methyltransferase from Staphylococcus haemolyticus (strain JCSC1435).